Consider the following 217-residue polypeptide: Thymidylate kinase (217 aa).

Residue 11-18 (GLEGAGKS) coordinates ATP.

The protein belongs to the thymidylate kinase family.

It catalyses the reaction dTMP + ATP = dTDP + ADP. Its function is as follows. Phosphorylation of dTMP to form dTDP in both de novo and salvage pathways of dTTP synthesis. The chain is Thymidylate kinase from Alkalilimnicola ehrlichii (strain ATCC BAA-1101 / DSM 17681 / MLHE-1).